The chain runs to 705 residues: Elongation factor G (705 aa).

In terms of domain architecture, tr-type G spans 8–294 (ELYRNFGIMA…SVIDYLPSPL (287 aa)). Residues 17–24 (AHIDAGKT), 92–96 (DTPGH), and 146–149 (NKMD) each bind GTP.

Belongs to the TRAFAC class translation factor GTPase superfamily. Classic translation factor GTPase family. EF-G/EF-2 subfamily.

The protein localises to the cytoplasm. Functionally, catalyzes the GTP-dependent ribosomal translocation step during translation elongation. During this step, the ribosome changes from the pre-translocational (PRE) to the post-translocational (POST) state as the newly formed A-site-bound peptidyl-tRNA and P-site-bound deacylated tRNA move to the P and E sites, respectively. Catalyzes the coordinated movement of the two tRNA molecules, the mRNA and conformational changes in the ribosome. The protein is Elongation factor G of Cereibacter sphaeroides (strain KD131 / KCTC 12085) (Rhodobacter sphaeroides).